Consider the following 366-residue polypeptide: Alanine racemase (366 aa).

K40 functions as the Proton acceptor; specific for D-alanine in the catalytic mechanism. An N6-(pyridoxal phosphate)lysine modification is found at K40. R136 provides a ligand contact to substrate. Catalysis depends on Y263, which acts as the Proton acceptor; specific for L-alanine. M310 provides a ligand contact to substrate.

It belongs to the alanine racemase family. Requires pyridoxal 5'-phosphate as cofactor.

The enzyme catalyses L-alanine = D-alanine. It functions in the pathway amino-acid biosynthesis; D-alanine biosynthesis; D-alanine from L-alanine: step 1/1. In terms of biological role, catalyzes the interconversion of L-alanine and D-alanine. May also act on other amino acids. This Streptococcus pyogenes serotype M5 (strain Manfredo) protein is Alanine racemase (alr).